A 182-amino-acid polypeptide reads, in one-letter code: Peptidoglycan L,D-endopeptidase MepK (182 aa).

Positions 1 to 30 (MDKFDANRRKLLALGGVALGAAILPTPAFA) form a signal peptide, tat-type signal. The Zn(2+) site is built by H133, D140, and H173.

The protein belongs to the peptidase M15 family. Requires Zn(2+) as cofactor. Post-translationally, predicted to be exported by the Tat system. The position of the signal peptide cleavage has not been experimentally proven.

It participates in cell wall biogenesis; cell wall polysaccharide biosynthesis. Functionally, l,D-endopeptidase that cleaves meso-diaminopimelic acid (mDAP)-mDAP cross-links in peptidoglycan. It works in conjunction with other elongation-specific D,D-endopeptidases to make space for efficient incorporation of nascent peptidoglycan strands into the sacculus and thus enable cell wall expansion. In Escherichia coli O157:H7, this protein is Peptidoglycan L,D-endopeptidase MepK.